Here is an 87-residue protein sequence, read N- to C-terminus: Small polypeptide ROTUNDIFOLIA LIKE 2 (87 aa).

A helical transmembrane segment spans residues 19 to 35 (LIPHTSHYILQLVYLHL). The required for DVL/RTFL small polypeptide activity stretch occupies residues 56–87 (GQMGRLNRAFREKRARFYIFRRCVIMLLRWSD).

This sequence belongs to the DVL/RTFL small polypeptides family.

The protein resides in the cell membrane. Small polypeptide acting as a regulatory molecule which coordinates cellular responses required for differentiation, growth and development, probably by restricting polar cell proliferation in lateral organs. The sequence is that of Small polypeptide ROTUNDIFOLIA LIKE 2 from Oryza sativa subsp. japonica (Rice).